An 88-amino-acid polypeptide reads, in one-letter code: Large ribosomal subunit protein bL27 (88 aa).

A disordered region spans residues 1 to 21; that stretch reads MAHKKGASSSRNGRDSAAHRL.

The protein belongs to the bacterial ribosomal protein bL27 family.

In Mycobacterium ulcerans (strain Agy99), this protein is Large ribosomal subunit protein bL27.